The sequence spans 384 residues: S-adenosylmethionine synthase (384 aa).

His-16 contributes to the ATP binding site. Residue Asp-18 coordinates Mg(2+). A K(+)-binding site is contributed by Glu-44. L-methionine is bound by residues Glu-57 and Gln-100. Residues 100 to 110 (QSADIAMGVDE) form a flexible loop region. Residues 165–167 (DAK), Asp-240, 246–247 (RK), Ala-263, and Lys-267 contribute to the ATP site. Position 240 (Asp-240) interacts with L-methionine. Residue Lys-271 coordinates L-methionine.

The protein belongs to the AdoMet synthase family. In terms of assembly, homotetramer; dimer of dimers. Mg(2+) is required as a cofactor. It depends on K(+) as a cofactor.

The protein resides in the cytoplasm. It catalyses the reaction L-methionine + ATP + H2O = S-adenosyl-L-methionine + phosphate + diphosphate. The protein operates within amino-acid biosynthesis; S-adenosyl-L-methionine biosynthesis; S-adenosyl-L-methionine from L-methionine: step 1/1. In terms of biological role, catalyzes the formation of S-adenosylmethionine (AdoMet) from methionine and ATP. The overall synthetic reaction is composed of two sequential steps, AdoMet formation and the subsequent tripolyphosphate hydrolysis which occurs prior to release of AdoMet from the enzyme. The chain is S-adenosylmethionine synthase from Teredinibacter turnerae (strain ATCC 39867 / T7901).